A 146-amino-acid polypeptide reads, in one-letter code: UPF0260 protein Ssed_2516 (146 aa).

This sequence belongs to the UPF0260 family.

In Shewanella sediminis (strain HAW-EB3), this protein is UPF0260 protein Ssed_2516.